The sequence spans 231 residues: MARGRSRKRSRSSSRSPSGSGREKGGARSSAASPGPRHRLSSAAAREGRKKEGRKKKKRKAKASSSDRSSSSRSSSSSSSTSSSDSDTRAKQHSRRKRGKHKDKKKKKKMKKKLKKKSKERVKEERGVSEALPGPSLELWQKEPLADSGPVLTDEQKSRIQAMKPMTKEEWDARQSVIRRVVDPETGRTRLIKGDGEVLEEIVSKERHKEINKQATRGDGLAFQVRTGMLK.

Composition is skewed to basic residues over residues M1–S12 and K51–K62. The interval M1–E155 is disordered. A compositionally biased stretch (low complexity) spans A63–D85. Over residues K91–E120 the composition is skewed to basic residues.

The protein belongs to the ARL6IP4 family.

It localises to the nucleus. The protein resides in the nucleolus. It is found in the nucleus speckle. In terms of biological role, may be involved in modulating alternative pre-mRNA splicing. The sequence is that of ADP-ribosylation factor-like protein 6-interacting protein 4 (ARL6IP4) from Gallus gallus (Chicken).